The following is a 205-amino-acid chain: Octanoyltransferase (205 aa).

Residues N30–F205 form the BPL/LPL catalytic domain. Residues R68–H75, A140–G142, and G153–A155 each bind substrate. C171 (acyl-thioester intermediate) is an active-site residue.

Belongs to the LipB family.

It is found in the cytoplasm. The enzyme catalyses octanoyl-[ACP] + L-lysyl-[protein] = N(6)-octanoyl-L-lysyl-[protein] + holo-[ACP] + H(+). Its pathway is protein modification; protein lipoylation via endogenous pathway; protein N(6)-(lipoyl)lysine from octanoyl-[acyl-carrier-protein]: step 1/2. Its function is as follows. Catalyzes the transfer of endogenously produced octanoic acid from octanoyl-acyl-carrier-protein onto the lipoyl domains of lipoate-dependent enzymes. Lipoyl-ACP can also act as a substrate although octanoyl-ACP is likely to be the physiological substrate. The protein is Octanoyltransferase of Wolbachia pipientis subsp. Culex pipiens (strain wPip).